Here is a 388-residue protein sequence, read N- to C-terminus: DNA primase small subunit PriS (388 aa).

Residues aspartate 100, aspartate 102, and aspartate 288 contribute to the active site.

It belongs to the eukaryotic-type primase small subunit family. In terms of assembly, heterodimer of a small subunit (PriS) and a large subunit (PriL). Mg(2+) serves as cofactor. Mn(2+) is required as a cofactor.

Catalytic subunit of DNA primase, an RNA polymerase that catalyzes the synthesis of short RNA molecules used as primers for DNA polymerase during DNA replication. The small subunit contains the primase catalytic core and has DNA synthesis activity on its own. Binding to the large subunit stabilizes and modulates the activity, increasing the rate of DNA synthesis while decreasing the length of the DNA fragments, and conferring RNA synthesis capability. The DNA polymerase activity may enable DNA primase to also catalyze primer extension after primer synthesis. May also play a role in DNA repair. The sequence is that of DNA primase small subunit PriS from Methanospirillum hungatei JF-1 (strain ATCC 27890 / DSM 864 / NBRC 100397 / JF-1).